The primary structure comprises 168 residues: Monothiol glutaredoxin-S7, chloroplastic (168 aa).

The transit peptide at 1–54 (MAATAAASVAAISPLPGASLPRPVSARVPLLPRASPPTWRLSVGSARARSTRCL) directs the protein to the chloroplast. Positions 67–168 (RATLDKVVGS…QETLEKAMLS (102 aa)) constitute a Glutaredoxin domain. Glutathione is bound at residue lysine 84. Cysteine 92 lines the [2Fe-2S] cluster pocket. Residues arginine 121, phenylalanine 133, and 146–147 (CD) each bind glutathione.

The protein belongs to the glutaredoxin family. CGFS subfamily.

The protein resides in the plastid. It is found in the chloroplast. Its function is as follows. May only reduce GSH-thiol disulfides, but not protein disulfides. This Oryza sativa subsp. japonica (Rice) protein is Monothiol glutaredoxin-S7, chloroplastic (GRXS7).